The following is a 292-amino-acid chain: Aquaporin PIP1-3/PIP1-4 (292 aa).

Residues 1 to 42 (MEGKEEDVRLGANKFSERQPIGTAAQGAGAGDDDKDYKEPPP) form a disordered region. Transmembrane regions (helical) follow at residues 61–81 (IAEFVATFLFLYITVLTVMGV) and 96–118 (IAWSFGGMIFALVYCTAGISGGH). An NPA 1 motif is present at residues 120–122 (NPA). 3 helical membrane passes run 139 to 159 (IFYIIMQCLGAICGAGVVKGF), 181 to 201 (GDGLGAEIVGTFILVYTVFSA), and 215 to 235 (ILAPLPIGFAVFLVHLATIPI). Positions 241–243 (NPA) match the NPA 2 motif. The chain crosses the membrane as a helical span at residues 263–283 (IFWVGPFIGAALAAIYHQVII).

It belongs to the MIP/aquaporin (TC 1.A.8) family. PIP (TC 1.A.8.11) subfamily.

It is found in the cell membrane. Its function is as follows. Aquaporins facilitate the transport of water and small neutral solutes across cell membranes. This chain is Aquaporin PIP1-3/PIP1-4 (PIP1-3), found in Zea mays (Maize).